We begin with the raw amino-acid sequence, 185 residues long: Capsid protein (185 aa).

The interval 136 to 185 is disordered; it reads NAPILSTLPETTVVRRRDRGRSPRRRTPSPRRRRSQSPRRRRSQSRESQC. A compositionally biased stretch (basic residues) spans 149 to 178; the sequence is VRRRDRGRSPRRRTPSPRRRRSQSPRRRRS. Phosphoserine; by host is present on residues S157, S164, and S172. The 1; half-length repeat unit spans residues 157-163; that stretch reads SPRRRTP. Residues 157–179 are 3 X 8 AA repeats of S-P-R-R-R-[PR]-S-Q; the sequence is SPRRRTPSPRRRRSQSPRRRRSQ. A Bipartite nuclear localization signal motif is present at residues 160–177; sequence RRTPSPRRRRSQSPRRRR. 2 repeat units span residues 164–171 and 172–179. The segment at 179–185 is RNA binding; the sequence is QSRESQC.

This sequence belongs to the orthohepadnavirus core antigen family. Homodimerizes, then multimerizes. Interacts with cytosol exposed regions of viral L glycoprotein present in the reticulum-to-Golgi compartment. Interacts with human FLNB. Phosphorylated form interacts with host importin alpha; this interaction depends on the exposure of the NLS, which itself depends upon genome maturation and/or phosphorylation of the capsid protein. Interacts with host NUP153. In terms of processing, phosphorylated by host SRPK1, SRPK2, and maybe protein kinase C or GAPDH. Phosphorylation is critical for pregenomic RNA packaging. Protein kinase C phosphorylation is stimulated by HBx protein and may play a role in transport of the viral genome to the nucleus at the late step during the viral replication cycle.

It localises to the virion. The protein localises to the host cytoplasm. In terms of biological role, self assembles to form an icosahedral capsid. Most capsids appear to be large particles with an icosahedral symmetry of T=4 and consist of 240 copies of capsid protein, though a fraction forms smaller T=3 particles consisting of 180 capsid proteins. Entering capsids are transported along microtubules to the nucleus. Phosphorylation of the capsid is thought to induce exposure of nuclear localization signal in the C-terminal portion of the capsid protein that allows binding to the nuclear pore complex via the importin (karyopherin-) alpha and beta. Capsids are imported in intact form through the nuclear pore into the nuclear basket, where it probably binds NUP153. Only capsids that contain the mature viral genome can release the viral DNA and capsid protein into the nucleoplasm. Immature capsids get stuck in the basket. Capsids encapsulate the pre-genomic RNA and the P protein. Pre-genomic RNA is reverse-transcribed into DNA while the capsid is still in the cytoplasm. The capsid can then either be directed to the nucleus, providing more genomes for transcription, or bud through the endoplasmic reticulum to provide new virions. The polypeptide is Capsid protein (Homo sapiens (Human)).